Here is a 114-residue protein sequence, read N- to C-terminus: Protein S40-2 (114 aa).

The tract at residues 23-50 is disordered; that stretch reads RYTKLYNSRNDEKKGTRRHETAEKTSPV. Residues 31 to 45 show a composition bias toward basic and acidic residues; sequence RNDEKKGTRRHETAE.

It belongs to the senescence regulator S40 family.

It localises to the cytoplasm. The chain is Protein S40-2 from Arabidopsis thaliana (Mouse-ear cress).